Here is a 426-residue protein sequence, read N- to C-terminus: C4-dicarboxylate transport protein (426 aa).

8 helical membrane passes run 8–28 (VLYVQVIVAIIIGIALGHFYP), 44–64 (LIKMVIGPIIFCTVVTGIAGM), 78–98 (LLYFEIVSTFALILGLAATHL), 148–168 (GEILQILLIALLFGAVLAHVG), 184–204 (ILFGMVGIITKLAPIGAFGAM), 222–242 (LIGTFYLTSIVFVVVVLGFIA), 297–317 (GYSFNLDGTNIYMTMAVLFIA), and 355–375 (AATLAVVPTIPLSGMVLILGI).

This sequence belongs to the dicarboxylate/amino acid:cation symporter (DAACS) (TC 2.A.23) family.

It is found in the cell inner membrane. Functionally, responsible for the transport of dicarboxylates such as succinate, fumarate, and malate from the periplasm across the membrane. In Paraburkholderia phymatum (strain DSM 17167 / CIP 108236 / LMG 21445 / STM815) (Burkholderia phymatum), this protein is C4-dicarboxylate transport protein.